Reading from the N-terminus, the 383-residue chain is MAKHLGKKIAPIPMSTDISVVDLIDNYFTAYNSARLREASQLLACDILKDGVTVGVSLSGAMTPAGFGVSALAPLIRNGFIDWMISTGANLYHDMHYGLGFELFAGNPFLDDVKLREEGTIRIYDIIFGYDVLLETDAFIRKILQAEPFQKRMGTAEFHYLLGKYVREVEKQLGVKHSCLLATAYEYGVPIYTSSPGDSSIGMNVAALALEGSQLILDPAIDVNETAAIAYNAREGEGKSAAVILGGGSPKNFLLQTQPQIHEVLGLEERGHDFFVQFTDARPDTGGLSGATPAEAVSWGKIDPDELPSTIVCYTDSTIALPLVTAYVLNQCPPRPLKRLYDRREELYDKLRTDYLAAKDKPVEKVATNGEVATYPCGTPIRQ.

The protein belongs to the deoxyhypusine synthase family.

The protein is Deoxyhypusine synthase-like protein of Nostoc sp. (strain PCC 7120 / SAG 25.82 / UTEX 2576).